The primary structure comprises 384 residues: Mitogen-activated protein kinase homolog 1 (384 aa).

Residues 32–319 form the Protein kinase domain; it reads YVPIKPIGRG…VMEALQHPYM (288 aa). Residues 38 to 46 and Lys-61 contribute to the ATP site; that span reads IGRGAYGIV. Residue Asp-158 is the Proton acceptor of the active site. Thr-191 carries the post-translational modification Phosphothreonine. The TXY motif lies at 191-193; that stretch reads TEY. Tyr-193 carries the post-translational modification Phosphotyrosine.

This sequence belongs to the protein kinase superfamily. CMGC Ser/Thr protein kinase family. MAP kinase subfamily. The cofactor is Mg(2+). Post-translationally, dually phosphorylated on Thr-191 and Tyr-193, which activates the enzyme. Expressed in vegetative organs such as leaf, root, or stem. In the reproductive organs, it is found in the ovary, but not in the stamen.

The enzyme catalyses L-seryl-[protein] + ATP = O-phospho-L-seryl-[protein] + ADP + H(+). It catalyses the reaction L-threonyl-[protein] + ATP = O-phospho-L-threonyl-[protein] + ADP + H(+). Activated by tyrosine and threonine phosphorylation. The chain is Mitogen-activated protein kinase homolog 1 (MPK1) from Petunia hybrida (Petunia).